Consider the following 85-residue polypeptide: Defensin-like protein 11 (85 aa).

The N-terminal stretch at 1-29 (MGKTISFSAIILVFLLVSTGLMKQGDAQA) is a signal peptide. 4 disulfides stabilise this stretch: cysteine 32-cysteine 84, cysteine 44-cysteine 68, cysteine 54-cysteine 75, and cysteine 58-cysteine 77.

It belongs to the DEFL family.

It localises to the secreted. The sequence is that of Defensin-like protein 11 from Arabidopsis thaliana (Mouse-ear cress).